The chain runs to 1079 residues: Capping protein inhibiting regulator of actin dynamics (1079 aa).

Basic and acidic residues predominate over residues 1–11; sequence MSQENVSDKVR. 7 disordered regions span residues 1-293, 308-327, 341-383, 420-453, 493-522, 606-639, and 658-1054; these read MSQE…EEER, ERKR…AEKR, EHRI…EWKR, PVTP…PTLS, EGKK…VFES, IFGQ…VQSR, and PSFL…TTQV. Residues 36–45 show a composition bias toward acidic residues; it reads DEGSSDEEEV. Basic and acidic residues predominate over residues 64–76; that stretch reads SAKEKSVSHDTVQ. The segment covering 115–134 has biased composition (basic residues); it reads AKHKLSVKPKNQRVSRKHRR. Acidic residues predominate over residues 140–158; that stretch reads HEDDFSEIQEEFEKDEEVF. Over residues 159 to 293 the composition is skewed to basic and acidic residues; it reads DSSREDYGII…EERKRAEEER (135 aa). A compositionally biased stretch (polar residues) spans 420 to 434; the sequence is PVTPATGQQGETTAE. The segment covering 670-682 has biased composition (polar residues); sequence PKSQRSESGSPIQ. Over residues 684–695 the composition is skewed to acidic residues; that stretch reads ESEDSDTKDEDG. Polar residues predominate over residues 756–781; the sequence is DNSTLSEKSSPISPQQENIEFQTTVA. Composition is skewed to basic and acidic residues over residues 896 to 930 and 944 to 983; these read WREK…DKET and GFRE…EDKG. Positions 984–993 are enriched in polar residues; sequence NGSSSIISKH. Positions 994-1016 are enriched in basic and acidic residues; that stretch reads QTADENKRPDTLLARFERRDNLK. A compositionally biased stretch (polar residues) spans 1020–1033; the sequence is TLPSSVTVEITDST.

Directly interacts with actin-capping proteins; this interaction decreases the binding of capping proteins to actin.

The protein resides in the cytoplasm. The protein localises to the cytosol. Its function is as follows. Involved in epithelial cell integrity by acting on the maintenance of the actin cytoskeleton. Positively regulates the actin polymerization, by inhibiting the interaction of actin-capping proteins with actin. The protein is Capping protein inhibiting regulator of actin dynamics (crad) of Danio rerio (Zebrafish).